A 261-amino-acid chain; its full sequence is MTKQMHAFHMVNPSPWPLTGAASAFMLTSGLAMWFHKHSNTLIFLSMILMLLTMYQWWRDITREGTFQGHHTSLVQKSLRYGMILFIVSEVCFFFGFFWTFYHSSLSPSPDLGMMWPPKGVIPLDPFEIPLLNTAILLGSGVSVTWAHHSLMEKTHKDMVISLSITIILGIYFTLLQGMEYFNSTFNISDNAYGSTFFVATGFHGGHVIIGTLFLTVCLLRQLMFHFTSSHHFGFEAAAWYWHFVDVVWLFLFISIYWWGS.

The Mitochondrial matrix segment spans residues 1-15 (MTKQMHAFHMVNPSP). A helical transmembrane segment spans residues 16 to 34 (WPLTGAASAFMLTSGLAMW). Topologically, residues 35 to 40 (FHKHSN) are mitochondrial intermembrane. A helical transmembrane segment spans residues 41-66 (TLIFLSMILMLLTMYQWWRDITREGT). The Mitochondrial matrix segment spans residues 67-72 (FQGHHT). Residues 73-105 (SLVQKSLRYGMILFIVSEVCFFFGFFWTFYHSS) traverse the membrane as a helical segment. Topologically, residues 106 to 128 (LSPSPDLGMMWPPKGVIPLDPFE) are mitochondrial intermembrane. Residues 129 to 152 (IPLLNTAILLGSGVSVTWAHHSLM) form a helical membrane-spanning segment. Over 153 to 155 (EKT) the chain is Mitochondrial matrix. Residues 156–183 (HKDMVISLSITIILGIYFTLLQGMEYFN) traverse the membrane as a helical segment. The Mitochondrial intermembrane segment spans residues 184-190 (STFNISD). The chain crosses the membrane as a helical span at residues 191–223 (NAYGSTFFVATGFHGGHVIIGTLFLTVCLLRQL). Residues 224 to 232 (MFHFTSSHH) are Mitochondrial matrix-facing. The helical transmembrane segment at 233–256 (FGFEAAAWYWHFVDVVWLFLFISI) threads the bilayer. The Mitochondrial intermembrane segment spans residues 257 to 261 (YWWGS).

The protein belongs to the cytochrome c oxidase subunit 3 family. As to quaternary structure, component of the cytochrome c oxidase (complex IV, CIV), a multisubunit enzyme composed of 14 subunits. The complex is composed of a catalytic core of 3 subunits MT-CO1, MT-CO2 and MT-CO3, encoded in the mitochondrial DNA, and 11 supernumerary subunits COX4I, COX5A, COX5B, COX6A, COX6B, COX6C, COX7A, COX7B, COX7C, COX8 and NDUFA4, which are encoded in the nuclear genome. The complex exists as a monomer or a dimer and forms supercomplexes (SCs) in the inner mitochondrial membrane with NADH-ubiquinone oxidoreductase (complex I, CI) and ubiquinol-cytochrome c oxidoreductase (cytochrome b-c1 complex, complex III, CIII), resulting in different assemblies (supercomplex SCI(1)III(2)IV(1) and megacomplex MCI(2)III(2)IV(2)).

The protein resides in the mitochondrion inner membrane. It carries out the reaction 4 Fe(II)-[cytochrome c] + O2 + 8 H(+)(in) = 4 Fe(III)-[cytochrome c] + 2 H2O + 4 H(+)(out). Its function is as follows. Component of the cytochrome c oxidase, the last enzyme in the mitochondrial electron transport chain which drives oxidative phosphorylation. The respiratory chain contains 3 multisubunit complexes succinate dehydrogenase (complex II, CII), ubiquinol-cytochrome c oxidoreductase (cytochrome b-c1 complex, complex III, CIII) and cytochrome c oxidase (complex IV, CIV), that cooperate to transfer electrons derived from NADH and succinate to molecular oxygen, creating an electrochemical gradient over the inner membrane that drives transmembrane transport and the ATP synthase. Cytochrome c oxidase is the component of the respiratory chain that catalyzes the reduction of oxygen to water. Electrons originating from reduced cytochrome c in the intermembrane space (IMS) are transferred via the dinuclear copper A center (CU(A)) of subunit 2 and heme A of subunit 1 to the active site in subunit 1, a binuclear center (BNC) formed by heme A3 and copper B (CU(B)). The BNC reduces molecular oxygen to 2 water molecules using 4 electrons from cytochrome c in the IMS and 4 protons from the mitochondrial matrix. In Myxine glutinosa (Atlantic hagfish), this protein is Cytochrome c oxidase subunit 3 (MT-CO3).